We begin with the raw amino-acid sequence, 74 residues long: DNA-directed RNA polymerase subunit omega (74 aa).

The protein belongs to the RNA polymerase subunit omega family. As to quaternary structure, the RNAP catalytic core consists of 2 alpha, 1 beta, 1 beta' and 1 omega subunit. When a sigma factor is associated with the core the holoenzyme is formed, which can initiate transcription.

The catalysed reaction is RNA(n) + a ribonucleoside 5'-triphosphate = RNA(n+1) + diphosphate. In terms of biological role, promotes RNA polymerase assembly. Latches the N- and C-terminal regions of the beta' subunit thereby facilitating its interaction with the beta and alpha subunits. The chain is DNA-directed RNA polymerase subunit omega from Marinomonas sp. (strain MWYL1).